A 699-amino-acid polypeptide reads, in one-letter code: Elongation factor G (699 aa).

The region spanning 8 to 288 is the tr-type G domain; the sequence is EDYRNFGIMA…AVVDYLPSPI (281 aa). Residues 17–24, 86–90, and 140–143 each bind GTP; these read AHIDAGKT, DTPGH, and NKMD.

It belongs to the TRAFAC class translation factor GTPase superfamily. Classic translation factor GTPase family. EF-G/EF-2 subfamily.

It localises to the cytoplasm. Its function is as follows. Catalyzes the GTP-dependent ribosomal translocation step during translation elongation. During this step, the ribosome changes from the pre-translocational (PRE) to the post-translocational (POST) state as the newly formed A-site-bound peptidyl-tRNA and P-site-bound deacylated tRNA move to the P and E sites, respectively. Catalyzes the coordinated movement of the two tRNA molecules, the mRNA and conformational changes in the ribosome. The sequence is that of Elongation factor G from Rhizobium meliloti (strain 1021) (Ensifer meliloti).